The chain runs to 842 residues: G-type lectin S-receptor-like serine/threonine-protein kinase At1g11330 (842 aa).

The N-terminal stretch at 1 to 29 (MVVSVTIRRRFVLLLLACTCLLSRRLCFG) is a signal peptide. The Extracellular portion of the chain corresponds to 30–444 (EDRITFSSPI…AHSELKTHSN (415 aa)). The Bulb-type lectin domain occupies 32–157 (RITFSSPIKD…RNNGEILWES (126 aa)). N-linked (GlcNAc...) asparagine glycans are attached at residues Asn-63, Asn-94, Asn-122, Asn-130, Asn-196, and Asn-260. The 37-residue stretch at 294 to 330 (PYTDCDAYGRCGRFGSCHAGENPPCKCVKGFVPKNNT) folds into the EGF-like; atypical domain. Cystine bridges form between Cys-298-Cys-310 and Cys-304-Cys-318. Residues Asn-328, Asn-336, Asn-354, and Asn-396 are each glycosylated (N-linked (GlcNAc...) asparagine). The PAN domain occupies 349-435 (CERQRNVSNG…SGIDLFIRVA (87 aa)). 2 disulfides stabilise this stretch: Cys-389–Cys-410 and Cys-393–Cys-399. A helical membrane pass occupies residues 445 to 465 (LAVMIAAPVIGVMLIAAVCVL). Residues 466 to 842 (LACRKYKKRP…DVSLTAVTGR (377 aa)) are Cytoplasmic-facing. Positions 524–810 (FSLRNKLGQG…SLADPKQPAF (287 aa)) constitute a Protein kinase domain. ATP is bound by residues 530–538 (LGQGGFGPV) and Lys-552. Ser-558 and Ser-573 each carry phosphoserine. The tract at residues 613–630 (MKQKILDWKTRFNIMEGI) is caM-binding. The active-site Proton acceptor is the Asp-649. Residues Ser-653 and Ser-666 each carry the phosphoserine modification. Thr-683 bears the Phosphothreonine mark. Ser-726, Ser-727, Ser-821, and Ser-830 each carry phosphoserine. Positions 814–842 (RGASEAESSDQSSQKVSINDVSLTAVTGR) are disordered. A compositionally biased stretch (low complexity) spans 818–827 (EAESSDQSSQ). The span at 828 to 842 (KVSINDVSLTAVTGR) shows a compositional bias: polar residues. A Phosphothreonine modification is found at Thr-837.

This sequence belongs to the protein kinase superfamily. Ser/Thr protein kinase family.

It is found in the cell membrane. It carries out the reaction L-seryl-[protein] + ATP = O-phospho-L-seryl-[protein] + ADP + H(+). The enzyme catalyses L-threonyl-[protein] + ATP = O-phospho-L-threonyl-[protein] + ADP + H(+). This chain is G-type lectin S-receptor-like serine/threonine-protein kinase At1g11330, found in Arabidopsis thaliana (Mouse-ear cress).